Here is a 526-residue protein sequence, read N- to C-terminus: Acetyl-CoA hydrolase (526 aa).

At Thr-2 the chain carries N-acetylthreonine. Residue 277-281 coordinates CoA; it reads GIGNI. Catalysis depends on Glu-302, which acts as the 5-glutamyl coenzyme A thioester intermediate. Position 350 is a phosphoserine (Ser-350). CoA-binding residues include Asn-392 and Gly-396.

Belongs to the acetyl-CoA hydrolase/transferase family. In terms of assembly, monomer. Post-translationally, glycosylated; contains mannose.

It localises to the cytoplasm. It catalyses the reaction acetyl-CoA + H2O = acetate + CoA + H(+). Presumably involved in regulating the intracellular acetyl-CoA pool for fatty acid and cholesterol synthesis and fatty acid oxidation. It may be involved in overall regulation of acetylation during melatonin synthesis. In Saccharomyces cerevisiae (strain ATCC 204508 / S288c) (Baker's yeast), this protein is Acetyl-CoA hydrolase (ACH1).